A 620-amino-acid polypeptide reads, in one-letter code: 1-deoxy-D-xylulose-5-phosphate synthase (620 aa).

Thiamine diphosphate is bound by residues histidine 80 and 121 to 123; that span reads GHS. A Mg(2+)-binding site is contributed by aspartate 152. Thiamine diphosphate-binding positions include 153–154, asparagine 181, tyrosine 288, and glutamate 370; that span reads GA. A Mg(2+)-binding site is contributed by asparagine 181.

The protein belongs to the transketolase family. DXPS subfamily. In terms of assembly, homodimer. Mg(2+) serves as cofactor. Requires thiamine diphosphate as cofactor.

It carries out the reaction D-glyceraldehyde 3-phosphate + pyruvate + H(+) = 1-deoxy-D-xylulose 5-phosphate + CO2. It functions in the pathway metabolic intermediate biosynthesis; 1-deoxy-D-xylulose 5-phosphate biosynthesis; 1-deoxy-D-xylulose 5-phosphate from D-glyceraldehyde 3-phosphate and pyruvate: step 1/1. Functionally, catalyzes the acyloin condensation reaction between C atoms 2 and 3 of pyruvate and glyceraldehyde 3-phosphate to yield 1-deoxy-D-xylulose-5-phosphate (DXP). The protein is 1-deoxy-D-xylulose-5-phosphate synthase of Klebsiella pneumoniae (strain 342).